Reading from the N-terminus, the 461-residue chain is Aldehyde dehydrogenase LUC3 (461 aa).

An NAD(+)-binding site is contributed by 215–220; that stretch reads GSTATG. Active-site residues include E237 and C271.

Belongs to the aldehyde dehydrogenase family.

The catalysed reaction is an aldehyde + NAD(+) + H2O = a carboxylate + NADH + 2 H(+). Its pathway is mycotoxin biosynthesis. Its function is as follows. Aldehyde dehydrogenase; part of the gene cluster that mediates the biosynthesis of the mycotoxin lucilactaene and the lucilactaene-related compound NG-391 that act as cell cycle inhibitors with potent growth inhibitory activity against malarial parasites, moderate growth inhibitory activity against cancer cells, and no activity against bacteria and fungi. LUC3 is important for lucilactaene biosynthesis and performs the oxidation of the C-20 alcoholic analog prelucilactaene G into a carboxylic derivative that has still to be identified. The pathway begins with the hybrid PKS-NRPS synthetase LUC5 which is responsible for the condensation of one acetyl-coenzyme A (CoA) unit with six malonyl-CoA units and the amide linkage of the arising heptaketide and homoserine, subsequently releasing the first intermediate prelucilactaene B. Both the cytochrome P450 monooxygenase LUC2 and the hydrolase LUC6 function in parallel in modification of prelucilactaene B. LUC6 may catalyze the 2-pyrrolidone ring formation to form prelucilactaene C from prelucilactaene B, followed by C-15 hydroxylation by the same enzyme to give prelucilactaene D, which is then converted to prelucilactaene E by epoxidation, and finally to prelucilactaene F by cyclization. Prelucilactane D, prelucilactaene E, and prelucilactaene F can be converted to dihydrolucilactaene, NG391, and lucilactaene, respectively, via C-20 methyl group hydroxylation by the cytochrome P450 monooxygenase LUC2. However, LUC2, unlike FUS8 in fusarin C biosynthesis, is not enough for the full oxidation of the C-20 methyl group into carboxylic acid, which is a prerequisite for the final methylation step. The aldehyde dehydrogenase LUC3 is involved in the biosynthesis by further oxidation of the C-20 alcoholic analog prelucilactaene G into a carboxylic derivative. This unidentified carboxylic derivative may be converted to demethyllucilactaene. As the last step, the methyltransferase LUC1 methylates the hydroxyl group at C-21 of demethyllucilactaene to generate lucilactaene. In Fusarium sp, this protein is Aldehyde dehydrogenase LUC3.